Here is an 86-residue protein sequence, read N- to C-terminus: Large ribosomal subunit protein bL27 (86 aa).

The tract at residues 1–26 (MATKKAGGSSRNGRDSAGRRLGIKKS) is disordered.

Belongs to the bacterial ribosomal protein bL27 family.

This Rickettsia typhi (strain ATCC VR-144 / Wilmington) protein is Large ribosomal subunit protein bL27.